The chain runs to 389 residues: E3 ubiquitin-protein ligase E3D (389 aa).

Alanine 2 is modified (N-acetylalanine). The BRAT1-like motif motif lies at 129-159; sequence PLPSENWGALVGEWCCHPDPFANKPLHPQEN. Cysteine 144 contributes to the Zn(2+) binding site. The interaction with UBE2C stretch occupies residues 235 to 257; that stretch reads QSSERSFPIIPRPRFVQSVIAQC. The HECT-like stretch occupies residues 353–389; the sequence is LPSATCLELLLILSKSNANLPSSLRHMNSFQVAFLKI.

In terms of assembly, interacts with UBE2C/UbcH10 (E2 ubiquitin-conjugating enzyme). In vitro, interacts with cyclin-B. Ubiquitinated by UBCH10 (E2 ubiquitin-conjugating enzyme).

The protein resides in the cytoplasm. The enzyme catalyses S-ubiquitinyl-[E2 ubiquitin-conjugating enzyme]-L-cysteine + [acceptor protein]-L-lysine = [E2 ubiquitin-conjugating enzyme]-L-cysteine + N(6)-ubiquitinyl-[acceptor protein]-L-lysine.. Its pathway is protein modification; protein ubiquitination. Functionally, E3 ubiquitin-protein ligase which accepts ubiquitin from specific E2 ubiquitin-conjugating enzymes, and transfers it to substrates, generally promoting their degradation by the proteasome. Independently of its E3 ubiquitin-protein ligase activity, acts as an inhibitor of CPSF3 endonuclease activity by blocking CPSF3 active site. The sequence is that of E3 ubiquitin-protein ligase E3D (UBE3D) from Pongo abelii (Sumatran orangutan).